Reading from the N-terminus, the 118-residue chain is C-type natriuretic peptide 2 (118 aa).

The signal sequence occupies residues 1-22 (MHFCHIVGWGLVLAVLYLRTEA). Positions 23-96 (KPVAQAHQKS…SRKIKGINKK (74 aa)) are excised as a propeptide. A disulfide bond links C102 and C118.

This sequence belongs to the natriuretic peptide family.

Its subcellular location is the secreted. In terms of biological role, exhibits natriuretic and vasodepressor activity. Has a cGMP-stimulating activity. The chain is C-type natriuretic peptide 2 from Aquarana catesbeiana (American bullfrog).